Here is a 239-residue protein sequence, read N- to C-terminus: MKRGKKYRAAAQLVDRTKLYSPLEAMRLAKQTNTMRVPATVEVAMRLGVDPRKADQMVRGTVNLPHGTGKTPRVLVFATAERAEEARAAGADYVGADELIEQVANGFLDFDAVVATPDLMGKVGRLGRILGPRGLMPNPKTGTVTNDVAKAVADIKSGKIEFRVDRQANLHLVIGKTDFTEQQLVENYAAALDEVLRLKPPTAKGRYLKKVTISTTMGPGIPVDPNRVRNLLAEETAAA.

It belongs to the universal ribosomal protein uL1 family. In terms of assembly, part of the 50S ribosomal subunit.

In terms of biological role, binds directly to 23S rRNA. The L1 stalk is quite mobile in the ribosome, and is involved in E site tRNA release. Its function is as follows. Protein L1 is also a translational repressor protein, it controls the translation of the L11 operon by binding to its mRNA. The sequence is that of Large ribosomal subunit protein uL1 from Acidothermus cellulolyticus (strain ATCC 43068 / DSM 8971 / 11B).